The sequence spans 282 residues: NADPH-dependent 7-cyano-7-deazaguanine reductase (282 aa).

88 to 90 serves as a coordination point for substrate; that stretch reads IES. 90–91 contributes to the NADPH binding site; the sequence is SK. The active-site Thioimide intermediate is the Cys190. The Proton donor role is filled by Asp197. 229–230 lines the substrate pocket; sequence HE. Position 258–259 (258–259) interacts with NADPH; the sequence is RG.

The protein belongs to the GTP cyclohydrolase I family. QueF type 2 subfamily. In terms of assembly, homodimer.

It is found in the cytoplasm. The enzyme catalyses 7-aminomethyl-7-carbaguanine + 2 NADP(+) = 7-cyano-7-deazaguanine + 2 NADPH + 3 H(+). Its pathway is tRNA modification; tRNA-queuosine biosynthesis. Catalyzes the NADPH-dependent reduction of 7-cyano-7-deazaguanine (preQ0) to 7-aminomethyl-7-deazaguanine (preQ1). The protein is NADPH-dependent 7-cyano-7-deazaguanine reductase of Citrobacter koseri (strain ATCC BAA-895 / CDC 4225-83 / SGSC4696).